The chain runs to 153 residues: 6,7-dimethyl-8-ribityllumazine synthase (153 aa).

5-amino-6-(D-ribitylamino)uracil-binding positions include F22, 56–58 (AFE), and 80–82 (CVI). Position 85 to 86 (85 to 86 (AT)) interacts with (2S)-2-hydroxy-3-oxobutyl phosphate. The active-site Proton donor is the H88. A 5-amino-6-(D-ribitylamino)uracil-binding site is contributed by F113. R127 serves as a coordination point for (2S)-2-hydroxy-3-oxobutyl phosphate.

This sequence belongs to the DMRL synthase family.

It catalyses the reaction (2S)-2-hydroxy-3-oxobutyl phosphate + 5-amino-6-(D-ribitylamino)uracil = 6,7-dimethyl-8-(1-D-ribityl)lumazine + phosphate + 2 H2O + H(+). It functions in the pathway cofactor biosynthesis; riboflavin biosynthesis; riboflavin from 2-hydroxy-3-oxobutyl phosphate and 5-amino-6-(D-ribitylamino)uracil: step 1/2. Catalyzes the formation of 6,7-dimethyl-8-ribityllumazine by condensation of 5-amino-6-(D-ribitylamino)uracil with 3,4-dihydroxy-2-butanone 4-phosphate. This is the penultimate step in the biosynthesis of riboflavin. The sequence is that of 6,7-dimethyl-8-ribityllumazine synthase from Endomicrobium trichonymphae.